The primary structure comprises 207 residues: dTDP-4-dehydrorhamnose 3-epimerase (207 aa).

Substrate contacts are provided by residues arginine 23, aspartate 28, 47 to 49, and arginine 59; that span reads QAN. The active-site Proton acceptor is histidine 62. Substrate is bound by residues lysine 72 and histidine 119. The active-site Proton donor is the tyrosine 132. Substrate contacts are provided by glutamate 143 and arginine 167.

Belongs to the dTDP-4-dehydrorhamnose 3,5-epimerase family.

Its pathway is antibiotic biosynthesis; novobiocin biosynthesis. DTDP-6-deoxy-D-xylo-4-hexulose 3-epimerase that acts together with NovU to catalyze the formation of dTDP-4-keto-6-deoxy-5-C-methyl-L-lyxo-hexose from dTDP-4-keto-6-deoxy-D-glucose in the novobiocin biosynthesis pathway, an aminocoumarin family antibiotic that targets bacterial DNA gyrases. The protein is dTDP-4-dehydrorhamnose 3-epimerase of Streptomyces niveus (Streptomyces spheroides).